We begin with the raw amino-acid sequence, 36 residues long: Photosystem I reaction center subunit VIII (36 aa).

A helical transmembrane segment spans residues 9 to 29 (ILVPLVGLIFPALSMALLFIY).

Belongs to the PsaI family.

The protein resides in the plastid. It localises to the chloroplast thylakoid membrane. May help in the organization of the PsaL subunit. The polypeptide is Photosystem I reaction center subunit VIII (Pyropia yezoensis (Susabi-nori)).